The sequence spans 369 residues: Anhydro-N-acetylmuramic acid kinase (369 aa).

Position 12-19 (12-19 (GTSLDGVD)) interacts with ATP.

It belongs to the anhydro-N-acetylmuramic acid kinase family.

The enzyme catalyses 1,6-anhydro-N-acetyl-beta-muramate + ATP + H2O = N-acetyl-D-muramate 6-phosphate + ADP + H(+). The protein operates within amino-sugar metabolism; 1,6-anhydro-N-acetylmuramate degradation. It participates in cell wall biogenesis; peptidoglycan recycling. Its function is as follows. Catalyzes the specific phosphorylation of 1,6-anhydro-N-acetylmuramic acid (anhMurNAc) with the simultaneous cleavage of the 1,6-anhydro ring, generating MurNAc-6-P. Is required for the utilization of anhMurNAc either imported from the medium or derived from its own cell wall murein, and thus plays a role in cell wall recycling. The sequence is that of Anhydro-N-acetylmuramic acid kinase from Shigella flexneri serotype 5b (strain 8401).